The chain runs to 123 residues: Angiogenin-2 (123 aa).

At Q1 the chain carries Pyrrolidone carboxylic acid. The active-site Proton acceptor is the H12. 3 cysteine pairs are disulfide-bonded: C25-C80, C38-C91, and C56-C106. The short motif at E30–M34 is the Nucleolar localization signal element. Residue N33 is glycosylated (N-linked (GlcNAc...) asparagine). 3 residues coordinate Zn(2+): D40, H82, and H113. The Proton donor role is filled by H113.

This sequence belongs to the pancreatic ribonuclease family. In terms of tissue distribution, serum and milk.

Its subcellular location is the cytoplasmic vesicle. The protein resides in the secretory vesicle lumen. It is found in the secreted. The protein localises to the nucleus. It localises to the nucleolus. Divalent metal ions, such as Cu2+ and Zn2+, may inhibit the ribonucleolytic activity. In terms of biological role, binds tightly to placental ribonuclease inhibitor and has very low ribonuclease activity. Has potent angiogenic activity. Angiogenin induces vascularization of normal and malignant tissues. Abolishes protein synthesis by specifically hydrolyzing cellular tRNAs. This chain is Angiogenin-2, found in Bos taurus (Bovine).